A 184-amino-acid polypeptide reads, in one-letter code: Zinc metalloproteinase-disintegrin-like ammodytagin (184 aa).

In terms of domain architecture, Peptidase M12B spans 1-90 (KSAAXVTLDL…CPAKCIDNKP (90 aa)). Ca(2+) is bound at residue aspartate 20. Histidine 64 contacts Zn(2+). The active site involves glutamate 65. Residues histidine 68 and histidine 74 each contribute to the Zn(2+) site. Positions 88, 100, 103, 105, and 107 each coordinate Ca(2+). Residues 98-124 (PAVCGNYFVELTPGSQCADGVCCDQCR) enclose the Disintegrin domain. 2 disulfides stabilise this stretch: cysteine 114–cysteine 120 and cysteine 165–cysteine 177.

The protein belongs to the venom metalloproteinase (M12B) family. P-III subfamily. P-IIIc sub-subfamily. Heterodimer; disulfide-linked. Zn(2+) is required as a cofactor. The N-terminus is blocked. Post-translationally, N-glycosylated. As to expression, expressed by the venom gland.

The protein resides in the secreted. Inhibited by EDTA, DTT and zinc ions. Partially inhibited by L-cysteine. Not inhibited by 2-propanol or PMSF. Activity is enhanced by calcium or magnesium ions. Functionally, snake venom zinc metalloprotease that has fibrinogenolytic and hemorrhagic activities in mouse and rats. Hydrolyzes the Aalpha-chain (FGA) and more slowly the Bbeta-chain of fibrinogen (FGB), without affecting the gamma-chain. Its hemorrhagic activity results of its involvement in cleavage of basal membrane components (nidogen and fibronectin but not laminin) and depletion of fibrinogen, prothrombin (F2) and factor X (F10) in blood circulation. Also possess potent azocaseinolytic activity and cleaves insulin B-chain, hydrolyzing it at positions Gln(4)-His(5), His(10)-Leu(11) and Tyr(16)-Leu(17). This chain is Zinc metalloproteinase-disintegrin-like ammodytagin, found in Vipera ammodytes ammodytes (Western sand viper).